A 338-amino-acid chain; its full sequence is Outer membrane transporter protein TsaT (338 aa).

Residues 1–22 (MNFRRRLCTAALIAALPLASQA) form the signal peptide.

In terms of assembly, part of a two-component transport system composed of TsaT and TsaS.

The protein resides in the cell outer membrane. In terms of biological role, involved in the uptake of p-toluenesulphonate (TSA). Forms a large, general diffusion pore with a preference for anions. In Comamonas testosteroni (Pseudomonas testosteroni), this protein is Outer membrane transporter protein TsaT (tsaT).